A 285-amino-acid chain; its full sequence is Pantothenate synthetase (285 aa).

Residue 30–37 (MGNLHAGH) coordinates ATP. H37 acts as the Proton donor in catalysis. (R)-pantoate is bound at residue Q61. Residue Q61 participates in beta-alanine binding. 149–152 (GEKD) serves as a coordination point for ATP. Residue Q155 coordinates (R)-pantoate. 186-189 (LSSR) contacts ATP.

The protein belongs to the pantothenate synthetase family. Homodimer.

Its subcellular location is the cytoplasm. It carries out the reaction (R)-pantoate + beta-alanine + ATP = (R)-pantothenate + AMP + diphosphate + H(+). The protein operates within cofactor biosynthesis; (R)-pantothenate biosynthesis; (R)-pantothenate from (R)-pantoate and beta-alanine: step 1/1. Functionally, catalyzes the condensation of pantoate with beta-alanine in an ATP-dependent reaction via a pantoyl-adenylate intermediate. This chain is Pantothenate synthetase, found in Ectopseudomonas mendocina (strain ymp) (Pseudomonas mendocina).